A 239-amino-acid chain; its full sequence is LexA repressor (239 aa).

A DNA-binding region (H-T-H motif) is located at residues 26 to 46 (FDEMKDALDLASKSGIHRLIT). Active-site for autocatalytic cleavage activity residues include S159 and K197.

The protein belongs to the peptidase S24 family. In terms of assembly, homodimer.

The catalysed reaction is Hydrolysis of Ala-|-Gly bond in repressor LexA.. Represses a number of genes involved in the response to DNA damage (SOS response), including recA and lexA. In the presence of single-stranded DNA, RecA interacts with LexA causing an autocatalytic cleavage which disrupts the DNA-binding part of LexA, leading to derepression of the SOS regulon and eventually DNA repair. This is LexA repressor from Rhizobium etli (strain ATCC 51251 / DSM 11541 / JCM 21823 / NBRC 15573 / CFN 42).